The primary structure comprises 134 residues: Glycine cleavage system H protein (134 aa).

Residues 24-106 (TVRVGITDYA…YGAGWLLDIQ (83 aa)) enclose the Lipoyl-binding domain. At lysine 65 the chain carries N6-lipoyllysine.

This sequence belongs to the GcvH family. In terms of assembly, the glycine cleavage system is composed of four proteins: P, T, L and H. Requires (R)-lipoate as cofactor.

In terms of biological role, the glycine cleavage system catalyzes the degradation of glycine. The H protein shuttles the methylamine group of glycine from the P protein to the T protein. This chain is Glycine cleavage system H protein, found in Mycobacterium bovis (strain ATCC BAA-935 / AF2122/97).